Here is a 431-residue protein sequence, read N- to C-terminus: Large envelope protein (431 aa).

Residue Gly2 is the site of N-myristoyl glycine; by host attachment. The interval 2–148 (GNNIKVTFNP…PPLRDTHPHL (147 aa)) is pre-S1. The segment at 2–207 (GNNIKVTFNP…PSTTGDPALS (206 aa)) is pre-S. Topologically, residues 2-214 (GNNIKVTFNP…ALSPEMSPSS (213 aa)) are virion surface; in external conformation. Over 2–286 (GNNIKVTFNP…NGFRWMYLRR (285 aa)) the chain is Intravirion; in internal conformation. Asn3 carries N-linked (GlcNAc...) asparagine glycosylation. The disordered stretch occupies residues 115–147 (IPRGLVPPQTPTNRDQGRKPTPPTPPLRDTHPH). The pre-S2 stretch occupies residues 149-207 (TMKNQTFHLQGFVDGLRDLTTTERQHNAYGDPFTTLSPAVPTVSTILSPPSTTGDPALS). A helical membrane pass occupies residues 215–235 (LLGLLAGLQVVYFLWTKILTI). At 236–286 (AQNLDWWWTSLSFPGGIPECTGQNSQFQTCKHLPTSCPPTCNGFRWMYLRR) the chain is on the intravirion; in external conformation side. Residues 287-307 (FIIYLLVLLLCLIFLLVLLDW) form a helical membrane-spanning segment. Topologically, residues 308–379 (KGLIPVCPLQ…WALARFSWLN (72 aa)) are virion surface. An N-linked (GlcNAc...) asparagine; by host glycan is attached at Asn351. A helical transmembrane segment spans residues 380–400 (LLVPLLQWLGGISLIAWFLLI). Over 401–406 (WMIWFW) the chain is Intravirion. A helical transmembrane segment spans residues 407 to 429 (GPALLSILPPFIPIFVLFFLIWV). Residues 430-431 (YI) lie on the Virion surface side of the membrane.

This sequence belongs to the orthohepadnavirus major surface antigen family. In terms of assembly, in its internal form (Li-HBsAg), interacts with the capsid protein and with the isoform S. Interacts with host chaperone CANX. Associates with host chaperone CANX through its pre-S2 N glycan; this association may be essential for isoform M proper secretion. As to quaternary structure, interacts with isoform L. Interacts with the antigens of satellite virus HDV (HDVAgs); this interaction is required for encapsidation of HDV genomic RNA. In terms of processing, isoform M is N-terminally acetylated by host at a ratio of 90%, and N-glycosylated by host at the pre-S2 region. Post-translationally, myristoylated.

The protein resides in the virion membrane. Functionally, the large envelope protein exists in two topological conformations, one which is termed 'external' or Le-HBsAg and the other 'internal' or Li-HBsAg. In its external conformation the protein attaches the virus to cell receptors and thereby initiating infection. This interaction determines the species specificity and liver tropism. This attachment induces virion internalization predominantly through caveolin-mediated endocytosis. The large envelope protein also assures fusion between virion membrane and endosomal membrane. In its internal conformation the protein plays a role in virion morphogenesis and mediates the contact with the nucleocapsid like a matrix protein. In terms of biological role, the middle envelope protein plays an important role in the budding of the virion. It is involved in the induction of budding in a nucleocapsid independent way. In this process the majority of envelope proteins bud to form subviral lipoprotein particles of 22 nm of diameter that do not contain a nucleocapsid. The polypeptide is Large envelope protein (Woodchuck hepatitis B virus (isolate 7) (WHV)).